The sequence spans 562 residues: Arginine--tRNA ligase (562 aa).

A 'HIGH' region motif is present at residues 129 to 139; the sequence is ANPTGPLHVGH.

The protein belongs to the class-I aminoacyl-tRNA synthetase family. Monomer.

It localises to the cytoplasm. It carries out the reaction tRNA(Arg) + L-arginine + ATP = L-arginyl-tRNA(Arg) + AMP + diphosphate. The chain is Arginine--tRNA ligase from Xylella fastidiosa (strain M12).